The sequence spans 474 residues: Cytochrome c biogenesis protein CcsB (474 aa).

Transmembrane regions (helical) follow at residues 36 to 56 (LKLAIGLFLAIAAASIAGTVI), 96 to 116 (SWWFVALLLLLATSLTICTFR), and 182 to 202 (VGPIVVHVSLLLIMAGAMIGA).

This sequence belongs to the Ccs1/CcsB family. In terms of assembly, may interact with CcsA.

The protein localises to the cell inner membrane. Functionally, required during biogenesis of c-type cytochromes (cytochrome c6 and cytochrome f) at the step of heme attachment. The protein is Cytochrome c biogenesis protein CcsB of Gloeobacter violaceus (strain ATCC 29082 / PCC 7421).